The primary structure comprises 315 residues: Olfactory receptor 51L1 (315 aa).

Residues 1-27 (MGDWNNSDAVEPIFILRGFPGLEYVHS) are Extracellular-facing. Asn-5 carries N-linked (GlcNAc...) asparagine glycosylation. Residues 28–48 (WLSILFCLAYLVAFMGNVTIL) traverse the membrane as a helical segment. Residues 49-56 (SVIWIESS) are Cytoplasmic-facing. A helical transmembrane segment spans residues 57 to 77 (LHQPMYYFISILAVNDLGMSL). Residues 78–101 (STLPTMLAVLWLDAPEIQASACYA) lie on the Extracellular side of the membrane. A disulfide bridge links Cys-99 with Cys-191. Residues 102–122 (QLFFIHTFTFLESSVLLAMAF) form a helical membrane-spanning segment. At 123–141 (DRFVAICHPLHYPTILTNS) the chain is on the cytoplasmic side. A helical transmembrane segment spans residues 142–162 (VIGKIGLACLLRSLGVVLPTP). Over 163-198 (LLLRHYHYCHGNALSHAFCLHQDVLRLSCTDARTNS) the chain is Extracellular. The chain crosses the membrane as a helical span at residues 199 to 219 (IYGLCVVIATLGVDSIFILLS). Residues 220 to 239 (YVLILNTVLDIASREEQLKA) lie on the Cytoplasmic side of the membrane. Residues 240-260 (LNTCVSHICVVLIFFVPVIGV) traverse the membrane as a helical segment. At 261 to 275 (SMVHRFGKHLSPIVH) the chain is on the extracellular side. The helical transmembrane segment at 276–296 (ILMADIYLLLPPVLNPIVYSV) threads the bilayer. Topologically, residues 297–315 (RTKQIRLGILHKFVLRRRF) are cytoplasmic.

Belongs to the G-protein coupled receptor 1 family.

The protein resides in the cell membrane. Functionally, odorant receptor. This chain is Olfactory receptor 51L1 (OR51L1), found in Homo sapiens (Human).